The sequence spans 176 residues: B9 domain-containing protein 2 (176 aa).

The region spanning Ala-2 to Thr-118 is the C2 B9-type domain.

It belongs to the B9D family. Part of the tectonic-like complex (also named B9 complex).

The protein resides in the cytoplasm. It localises to the cytoskeleton. The protein localises to the cilium basal body. It is found in the cilium axoneme. Functionally, component of the tectonic-like complex, a complex localized at the transition zone of primary cilia and acting as a barrier that prevents diffusion of transmembrane proteins between the cilia and plasma membranes. This chain is B9 domain-containing protein 2 (b9d2), found in Xenopus laevis (African clawed frog).